The primary structure comprises 268 residues: Protein CONTINUOUS VASCULAR RING 1 (268 aa).

The Cytoplasmic portion of the chain corresponds to 1-70; sequence MGDEKPVIVM…GWASKKFMTG (70 aa). The tract at residues 21-48 is disordered; that stretch reads IPVADSGDKDDGSSSKPSSSSSASSSSH. Over residues 34-48 the composition is skewed to low complexity; that stretch reads SSKPSSSSSASSSSH. Residues 71-91 form a helical membrane-spanning segment; sequence CVILLPIAITFYITWWFIHFV. Over 92–103 the chain is Extracellular; sequence DGFFSPIYAQLG. Residues 104–124 traverse the membrane as a helical segment; it reads INVFGFGFLTSIAFIFLVGVF. Residues 125-268 are Cytoplasmic-facing; it reads MSSWLGASVL…LASIDRATSL (144 aa).

This sequence belongs to the plant COV1 protein family. In terms of tissue distribution, mostly expressed in flowers and stems, and, to a lower extent, in roots and leaves.

The protein localises to the membrane. Involved in the regulation of vascular patterning in the stem, probably by negatively regulating the differentiation of vascular tissue. The protein is Protein CONTINUOUS VASCULAR RING 1 of Arabidopsis thaliana (Mouse-ear cress).